We begin with the raw amino-acid sequence, 100 residues long: Large ribosomal subunit protein bL21 (100 aa).

Belongs to the bacterial ribosomal protein bL21 family. In terms of assembly, part of the 50S ribosomal subunit. Contacts protein L20.

This protein binds to 23S rRNA in the presence of protein L20. The sequence is that of Large ribosomal subunit protein bL21 from Corynebacterium urealyticum (strain ATCC 43042 / DSM 7109).